The sequence spans 133 residues: Small ribosomal subunit protein uS8 (133 aa).

This sequence belongs to the universal ribosomal protein uS8 family. In terms of assembly, part of the 30S ribosomal subunit. Contacts proteins S5 and S12.

Functionally, one of the primary rRNA binding proteins, it binds directly to 16S rRNA central domain where it helps coordinate assembly of the platform of the 30S subunit. The chain is Small ribosomal subunit protein uS8 from Synechococcus sp. (strain CC9605).